The chain runs to 39 residues: Photosystem II reaction center protein L (39 aa).

Residues S18–F38 traverse the membrane as a helical segment.

Belongs to the PsbL family. PSII is composed of 1 copy each of membrane proteins PsbA, PsbB, PsbC, PsbD, PsbE, PsbF, PsbH, PsbI, PsbJ, PsbK, PsbL, PsbM, PsbT, PsbX, PsbY, Psb30/Ycf12, peripheral proteins PsbO, CyanoQ (PsbQ), PsbU, PsbV and a large number of cofactors. It forms dimeric complexes.

It is found in the cellular thylakoid membrane. Functionally, one of the components of the core complex of photosystem II (PSII). PSII is a light-driven water:plastoquinone oxidoreductase that uses light energy to abstract electrons from H(2)O, generating O(2) and a proton gradient subsequently used for ATP formation. It consists of a core antenna complex that captures photons, and an electron transfer chain that converts photonic excitation into a charge separation. This subunit is found at the monomer-monomer interface and is required for correct PSII assembly and/or dimerization. The chain is Photosystem II reaction center protein L from Prochlorococcus marinus (strain SARG / CCMP1375 / SS120).